Consider the following 302-residue polypeptide: Succinate--CoA ligase [ADP-forming] subunit alpha (302 aa).

CoA is bound by residues 17 to 20 (TGST), Lys43, and 96 to 98 (ITE). Tyr159 provides a ligand contact to substrate. The active-site Tele-phosphohistidine intermediate is the His247.

The protein belongs to the succinate/malate CoA ligase alpha subunit family. In terms of assembly, heterotetramer of two alpha and two beta subunits.

It catalyses the reaction succinate + ATP + CoA = succinyl-CoA + ADP + phosphate. The enzyme catalyses GTP + succinate + CoA = succinyl-CoA + GDP + phosphate. The protein operates within carbohydrate metabolism; tricarboxylic acid cycle; succinate from succinyl-CoA (ligase route): step 1/1. Succinyl-CoA synthetase functions in the citric acid cycle (TCA), coupling the hydrolysis of succinyl-CoA to the synthesis of either ATP or GTP and thus represents the only step of substrate-level phosphorylation in the TCA. The alpha subunit of the enzyme binds the substrates coenzyme A and phosphate, while succinate binding and nucleotide specificity is provided by the beta subunit. This chain is Succinate--CoA ligase [ADP-forming] subunit alpha, found in Staphylococcus aureus (strain MSSA476).